A 625-amino-acid chain; its full sequence is MSSRAGPMSKEKNVQGGYRPEVEQLVQGLAGTRLASSQDDGGEWEVISKKNKNKPGNTSGKTWVSQNSNPPRAWGGQQQGRGSNVSGRGNNVSGRGNGNGRGIQANISGRGRALSRKYDNNFVAPPPVSRPPLEGGWNWQARGGSAQHTAVQEFPDVEDDVDNASEEENDSDALDDSDDDLASDDYDSDVSQKSHGSRKQNKWFKKFFGSLDSLSIEQINEPQRQWHCPACQNGPGAIDWYNLHPLLAHARTKGARRVKLHRELAEVLEKDLQMRGASVIPCGEIYGQWKGLGEDEKDYEIVWPPMVIIMNTRLDKDDNDKWLGMGNQELLEYFDKYEALRARHSYGPQGHRGMSVLMFESSATGYLEAERLHRELAEMGLDRIAWGQKRSMFSGGVRQLYGFLATKQDLDIFNQHSQGKTRLKFELKSYQEMVVKELRQISEDNQQLNYFKNKLSKQNKHAKVLEESLEIMSEKLRRTAEDNRIVRQRTKMQHEQNREEMDAHDRFFMDSIKQIHERRDAKEENFEMLQQQERAKVVGQQQQNINPSSNDDCRKRAEEVSSFIEFQEKEMEEFVEEREMLIKDQEKKMEDMKKRHHEEIFDLEKEFDEALEQLMYKHGLHNEDD.

Disordered stretches follow at residues 1-20 (MSSR…GYRP), 30-148 (AGTR…SAQH), and 161-195 (VDNA…QKSH). Residues 54-70 (KPGNTSGKTWVSQNSNP) are compositionally biased toward polar residues. Low complexity predominate over residues 80 to 94 (GRGSNVSGRGNNVSG). Residues 161-188 (VDNASEEENDSDALDDSDDDLASDDYDS) are compositionally biased toward acidic residues. Coiled coils occupy residues 452 to 533 (KNKL…QQQE) and 564 to 615 (IEFQ…EQLM).

Belongs to the SGS3 family. Interacts with begomoviruses protein V2. Interacts with SGIP1 in cytoplasmic granules.

The protein localises to the cytoplasm. The protein resides in the perinuclear region. It localises to the cytoplasmic granule. Required for post-transcriptional gene silencing and natural virus resistance. May bind nucleic acids and is essential for the biogenesis of trans-acting siRNAs but is not required for silencing induced by IR-PTGS. Involved in the juvenile-to-adult transition regulation. In case of begomoviruses infection, it is targeted by the viral protein V2 leading to suppression of post-transcriptional gene silencing. Involved in the mechanisms necessary for quick response to heat and subsequent heritable transgenerational memory of heat acclimation (global warming) such as early flowering and attenuated immunity; this process includes epigenetic regulation as well as post-transcriptional gene silencing (PTGS). In response to heat, HSFA2 is activated and promotes the expression of REF6 which in turn derepresses HSFA2, thus establishing an inheritable feedback loop able to trigger SGIP1 and subsequent SGIP1-mediated SGS3 degradation; this prevents the biosynthesis of trans-acting siRNA (tasiRNA) and leads to the release of HTT5, which drives early flowering but attenuates immunity. This Arabidopsis thaliana (Mouse-ear cress) protein is Protein SUPPRESSOR OF GENE SILENCING 3.